A 509-amino-acid chain; its full sequence is Maturase K (509 aa).

This sequence belongs to the intron maturase 2 family. MatK subfamily.

The protein localises to the plastid. The protein resides in the chloroplast. Usually encoded in the trnK tRNA gene intron. Probably assists in splicing its own and other chloroplast group II introns. This chain is Maturase K, found in Arpophyllum giganteum (Hyacinth orchid).